The chain runs to 468 residues: N-acyl-phosphatidylethanolamine-hydrolyzing phospholipase D, mitochondrial (468 aa).

The N-terminal 39 residues, 1–39 (MNFVTCHVQMRLLLQRRLVRLRESELFRPQTSLSTFKRH), are a transit peptide targeting the mitochondrion. A helical membrane pass occupies residues 54 to 76 (YARILLLSVLVPYTGYAFYVSLA). His265, His267, Asp269, His270, His332, and His425 together coordinate Zn(2+).

Belongs to the NAPE-PLD family. Zn(2+) serves as cofactor.

The protein localises to the mitochondrion membrane. The enzyme catalyses an N-acyl-1,2-diacyl-sn-glycero-3-phosphoethanolamine + H2O = an N-acylethanolamine + a 1,2-diacyl-sn-glycero-3-phosphate + H(+). Its function is as follows. Hydrolyzes N-acyl-phosphatidylethanolamines (NAPEs) to produce N-acylethanolamines (NAEs). The polypeptide is N-acyl-phosphatidylethanolamine-hydrolyzing phospholipase D, mitochondrial (FMP30) (Saccharomyces cerevisiae (strain ATCC 204508 / S288c) (Baker's yeast)).